An 89-amino-acid polypeptide reads, in one-letter code: Small ribosomal subunit protein uS15 (89 aa).

This sequence belongs to the universal ribosomal protein uS15 family. Part of the 30S ribosomal subunit. Forms a bridge to the 50S subunit in the 70S ribosome, contacting the 23S rRNA.

Functionally, one of the primary rRNA binding proteins, it binds directly to 16S rRNA where it helps nucleate assembly of the platform of the 30S subunit by binding and bridging several RNA helices of the 16S rRNA. Its function is as follows. Forms an intersubunit bridge (bridge B4) with the 23S rRNA of the 50S subunit in the ribosome. The protein is Small ribosomal subunit protein uS15 of Mycolicibacterium smegmatis (strain ATCC 700084 / mc(2)155) (Mycobacterium smegmatis).